A 375-amino-acid chain; its full sequence is MDALQLANSAFAVDLFKQLCEKEPLGNVLFSPICLSTSLSLAQVGAKGDTANEIGQVLHFENVKDVPFGFQTVTSDVNKLSSFYSLKLIKRLYVDKSLNLSTEFISSTKRPYAKELETVDFKDKLEETKGQINNSIKDLTDGHFENILADNSVNDQTKILVVNAAYFVGKWMKKFSESETKECPFRVNKTDTKPVQMMNMEATFCMGNIDSINCKIIELPFQNKHLSMFILLPKDVEDESTGLEKIEKQLNSESLSQWTNPSTMANAKVKLSIPKFKVEKMIDPKACLENLGLKHIFSEDTSDFSGMSETKGVALSNVIHKVCLEITEDGGDSIEVPGARILQHKDELNADHPFIYIIRHNKTRNIIFFGKFCSP.

Residues N99, N133, N188, and N361 are each glycosylated (N-linked (GlcNAc...) asparagine).

The protein belongs to the serpin family. Ov-serpin subfamily. As to quaternary structure, interacts with IRF6. In terms of tissue distribution, normal mammary epithelial cells.

Its subcellular location is the secreted. It localises to the extracellular space. Functionally, tumor suppressor. It blocks the growth, invasion, and metastatic properties of mammary tumors. As it does not undergo the S (stressed) to R (relaxed) conformational transition characteristic of active serpins, it exhibits no serine protease inhibitory activity. The protein is Serpin B5 (SERPINB5) of Homo sapiens (Human).